Here is a 297-residue protein sequence, read N- to C-terminus: F-box only protein 2 (297 aa).

The interval 1 to 42 (MDGDGDPESVGQPEEASPEEQQEEACAEEANGGEERPEDDGE) is disordered. The segment covering 16 to 27 (ASPEEQQEEACA) has biased composition (acidic residues). One can recognise an F-box domain in the interval 45 to 92 (AAYLDELPEPLLLRVLAELPAAQLVQACRLVCLRWKELVDGAPLWLLK). The region spanning 114–297 (FYFLSKRRRN…VTNSSVWVEP (184 aa)) is the FBA domain. Residues 211–213 (RRD) and 279–280 (YW) each bind a carbohydrate.

Component of the SCF(FBXO2) complex consisting of CUL1, RBX1, SKP1 and FBXO2. Predominantly detected as heterodimer with SKP1; the heterodimer with SKP1 is not part of the SCF(FBXO2) complex.

It is found in the cytoplasm. The protein resides in the microsome membrane. It participates in protein modification; protein ubiquitination. Its function is as follows. Substrate recognition component of a SCF (SKP1-CUL1-F-box protein) E3 ubiquitin-protein ligase complex that mediates the ubiquitination and subsequent proteasomal degradation of target proteins. Involved in the endoplasmic reticulum-associated degradation pathway (ERAD) for misfolded lumenal proteins by recognizing and binding sugar chains on unfolded glycoproteins that are retrotranslocated into the cytosol and promoting their ubiquitination and subsequent degradation. Prevents formation of cytosolic aggregates of unfolded glycoproteins that have been retrotranslocated into the cytosol. Able to recognize and bind denatured glycoproteins, preferentially those of the high-mannose type. The sequence is that of F-box only protein 2 (FBXO2) from Bos taurus (Bovine).